A 495-amino-acid chain; its full sequence is Glycerol kinase (495 aa).

Thr14 is a binding site for ADP. ATP contacts are provided by Thr14, Thr15, and Ser16. Thr14 is a sn-glycerol 3-phosphate binding site. Arg18 lines the ADP pocket. Residues Arg84, Glu85, Tyr136, and Asp246 each coordinate sn-glycerol 3-phosphate. Positions 84, 85, 136, 246, and 247 each coordinate glycerol. ADP is bound by residues Thr268 and Gly312. ATP-binding residues include Thr268, Gly312, Gln316, and Gly413. The ADP site is built by Gly413 and Asn417.

This sequence belongs to the FGGY kinase family.

The catalysed reaction is glycerol + ATP = sn-glycerol 3-phosphate + ADP + H(+). Its pathway is polyol metabolism; glycerol degradation via glycerol kinase pathway; sn-glycerol 3-phosphate from glycerol: step 1/1. Its activity is regulated as follows. Inhibited by fructose 1,6-bisphosphate (FBP). In terms of biological role, key enzyme in the regulation of glycerol uptake and metabolism. Catalyzes the phosphorylation of glycerol to yield sn-glycerol 3-phosphate. This is Glycerol kinase from Bdellovibrio bacteriovorus (strain ATCC 15356 / DSM 50701 / NCIMB 9529 / HD100).